The primary structure comprises 523 residues: Apolipoprotein N-acyltransferase (523 aa).

The next 7 membrane-spanning stretches (helical) occupy residues L26 to P46, W49 to Q66, A74 to I94, A109 to W129, Q137 to L157, L185 to A205, and W212 to A232. Residues L246–G487 form the CN hydrolase domain. The active-site Proton acceptor is the E284. Residue K345 is part of the active site. The Nucleophile role is filled by C395. A helical transmembrane segment spans residues F494–L514.

The protein belongs to the CN hydrolase family. Apolipoprotein N-acyltransferase subfamily.

It localises to the cell inner membrane. The catalysed reaction is N-terminal S-1,2-diacyl-sn-glyceryl-L-cysteinyl-[lipoprotein] + a glycerophospholipid = N-acyl-S-1,2-diacyl-sn-glyceryl-L-cysteinyl-[lipoprotein] + a 2-acyl-sn-glycero-3-phospholipid + H(+). It functions in the pathway protein modification; lipoprotein biosynthesis (N-acyl transfer). In terms of biological role, catalyzes the phospholipid dependent N-acylation of the N-terminal cysteine of apolipoprotein, the last step in lipoprotein maturation. The sequence is that of Apolipoprotein N-acyltransferase from Ralstonia nicotianae (strain ATCC BAA-1114 / GMI1000) (Ralstonia solanacearum).